A 158-amino-acid chain; its full sequence is Transcription elongation factor GreA (158 aa).

Positions 10-75 (TKEGKEKLEQ…QMLENMIRNA (66 aa)) form a coiled coil.

The protein belongs to the GreA/GreB family.

In terms of biological role, necessary for efficient RNA polymerase transcription elongation past template-encoded arresting sites. The arresting sites in DNA have the property of trapping a certain fraction of elongating RNA polymerases that pass through, resulting in locked ternary complexes. Cleavage of the nascent transcript by cleavage factors such as GreA or GreB allows the resumption of elongation from the new 3'terminus. GreA releases sequences of 2 to 3 nucleotides. This is Transcription elongation factor GreA from Geobacillus kaustophilus (strain HTA426).